The sequence spans 139 residues: Low molecular weight protein-tyrosine-phosphatase PtpB (139 aa).

The Nucleophile role is filled by cysteine 7. The active site involves arginine 13. Residue aspartate 111 is the Proton donor of the active site.

The protein belongs to the low molecular weight phosphotyrosine protein phosphatase family.

It catalyses the reaction O-phospho-L-tyrosyl-[protein] + H2O = L-tyrosyl-[protein] + phosphate. Its function is as follows. Dephosphorylates the phosphotyrosine-containing proteins. This Staphylococcus epidermidis (strain ATCC 35984 / DSM 28319 / BCRC 17069 / CCUG 31568 / BM 3577 / RP62A) protein is Low molecular weight protein-tyrosine-phosphatase PtpB (ptpB).